A 268-amino-acid chain; its full sequence is tRNA pseudouridine synthase A (268 aa).

D52 serves as the catalytic Nucleophile. Residue Y110 participates in substrate binding.

It belongs to the tRNA pseudouridine synthase TruA family. Homodimer.

The catalysed reaction is uridine(38/39/40) in tRNA = pseudouridine(38/39/40) in tRNA. In terms of biological role, formation of pseudouridine at positions 38, 39 and 40 in the anticodon stem and loop of transfer RNAs. This is tRNA pseudouridine synthase A from Prochlorococcus marinus (strain MIT 9215).